Here is a 210-residue protein sequence, read N- to C-terminus: Cytidylate kinase (210 aa).

Position 9 to 17 (9 to 17 (GPAAAGKGT)) interacts with ATP.

It belongs to the cytidylate kinase family. Type 1 subfamily.

Its subcellular location is the cytoplasm. It carries out the reaction CMP + ATP = CDP + ADP. The enzyme catalyses dCMP + ATP = dCDP + ADP. This chain is Cytidylate kinase, found in Agrobacterium fabrum (strain C58 / ATCC 33970) (Agrobacterium tumefaciens (strain C58)).